The chain runs to 356 residues: Nuclear hormone receptor family member nhr-42 (356 aa).

The nuclear receptor DNA-binding region spans 7–82 (SQTCLICGDS…VGMRESAVLS (76 aa)). The NR C4-type zinc finger occupies 10–30 (CLICGDSADSLHFGALSCRAC). The NR C4-type; atypical zinc finger occupies 48-70 (CDRQCKVDTGMRKLCASCRYDKC). The 249-residue stretch at 108 to 356 (TSDSVLENLQ…HSSIFGNMAE (249 aa)) folds into the NR LBD domain.

It belongs to the nuclear hormone receptor family.

The protein localises to the nucleus. Functionally, orphan nuclear receptor. In Caenorhabditis elegans, this protein is Nuclear hormone receptor family member nhr-42 (nhr-42).